A 131-amino-acid chain; its full sequence is Fumarate reductase subunit C (131 aa).

The next 3 membrane-spanning stretches (helical) occupy residues Glu30–Leu50, Phe63–His83, and Ile109–Leu129.

Belongs to the FrdC family. As to quaternary structure, part of an enzyme complex containing four subunits: a flavoprotein (FrdA), an iron-sulfur protein (FrdB), and two hydrophobic anchor proteins (FrdC and FrdD).

It localises to the cell inner membrane. Two distinct, membrane-bound, FAD-containing enzymes are responsible for the catalysis of fumarate and succinate interconversion; fumarate reductase is used in anaerobic growth, and succinate dehydrogenase is used in aerobic growth. Anchors the catalytic components of the fumarate reductase complex to the cell inner membrane, binds quinones. In Escherichia coli O17:K52:H18 (strain UMN026 / ExPEC), this protein is Fumarate reductase subunit C.